The primary structure comprises 418 residues: NADH-quinone oxidoreductase subunit D (418 aa).

The protein belongs to the complex I 49 kDa subunit family. As to quaternary structure, NDH-1 is composed of 14 different subunits. Subunits NuoB, C, D, E, F, and G constitute the peripheral sector of the complex.

The protein resides in the cell inner membrane. It carries out the reaction a quinone + NADH + 5 H(+)(in) = a quinol + NAD(+) + 4 H(+)(out). Its function is as follows. NDH-1 shuttles electrons from NADH, via FMN and iron-sulfur (Fe-S) centers, to quinones in the respiratory chain. The immediate electron acceptor for the enzyme in this species is believed to be ubiquinone. Couples the redox reaction to proton translocation (for every two electrons transferred, four hydrogen ions are translocated across the cytoplasmic membrane), and thus conserves the redox energy in a proton gradient. This Neisseria gonorrhoeae (strain ATCC 700825 / FA 1090) protein is NADH-quinone oxidoreductase subunit D.